The chain runs to 508 residues: Protection of telomeres protein tpz1 (508 aa).

Residues 2 to 223 are pot1-binding; sequence SNCLKHPWLE…ENTTHGIYLE (222 aa). 3 disordered regions span residues 159 to 178, 235 to 269, and 282 to 358; these read QEAS…NSRD, VSET…PSLP, and PPPF…QSHR. Positions 327–347 are enriched in polar residues; the sequence is STEQLNSSLTIERSQSIQSTD. Residues 348 to 358 are compositionally biased toward basic and acidic residues; the sequence is SKQRVETQSHR. Residues 379 to 508 form a ccq1/poz1-binding region; that stretch reads TIDDSTGKLL…KKIEEFRNKS (130 aa).

In terms of assembly, interacts with ccq1, pot1 and poz1.

Its subcellular location is the chromosome. It localises to the telomere. The protein localises to the nucleus. Functionally, telomeric DNA-binding protein that is required to protect the 3'-end telomeric overhang and involved in telomere length regulation. recruits poz1 and ccq1 to telomeres, regulating telomere length negatively and positively respectively. The sequence is that of Protection of telomeres protein tpz1 (tpz1) from Schizosaccharomyces pombe (strain 972 / ATCC 24843) (Fission yeast).